The following is a 358-amino-acid chain: Electron transfer flavoprotein subunit alpha, mitochondrial (358 aa).

298-326 (LYMAFGVSGAIQHLAGMRDSKVIVAVNKD) lines the FAD pocket.

This sequence belongs to the ETF alpha-subunit/FixB family. In terms of assembly, heterodimer of an alpha and a beta subunit. It depends on FAD as a cofactor.

It localises to the mitochondrion matrix. In terms of biological role, the electron transfer flavoprotein serves as a specific electron acceptor for several dehydrogenases, including five acyl-CoA dehydrogenases, glutaryl-CoA and sarcosine dehydrogenase. It transfers the electrons to the main mitochondrial respiratory chain via ETF-ubiquinone oxidoreductase (ETF dehydrogenase). In Oryza sativa subsp. indica (Rice), this protein is Electron transfer flavoprotein subunit alpha, mitochondrial (ETFA).